The following is a 295-amino-acid chain: MDQKQIEEIVRSVMASMGQAAPAPSEAKCATTTCTTPVTSESCALDLGSAEAKAWIGVENPHRADVLTELRRSTVARVCTGRAGPRPRTQALLRFLADHSRSKDTVLKEVPEEWVKAQGLLEVRSEISDKNLYLTRPDMGRRLCAEAVEALKAQCVANPDVQVVISDGLSTDAITVNYEEILPPLMAGLKQAGLKVGTPFFVRYGRVKIEDQIGEILGAKVVILLVGERPGLGQSESLSCYAVYSPRIATTVEADRTCISNIHQGGTPPVEAAAVIVDLAKRMLEQKASGINMTR.

Positions 207, 228, and 258 each coordinate adenosylcob(III)alamin.

The protein belongs to the EutC family. The basic unit is a heterodimer which dimerizes to form tetramers. The heterotetramers trimerize; 6 large subunits form a core ring with 6 small subunits projecting outwards. The cofactor is adenosylcob(III)alamin.

It localises to the bacterial microcompartment. It catalyses the reaction ethanolamine = acetaldehyde + NH4(+). It functions in the pathway amine and polyamine degradation; ethanolamine degradation. In terms of biological role, catalyzes the deamination of various vicinal amino-alcohols to oxo compounds. Allows this organism to utilize ethanolamine as the sole source of nitrogen and carbon in the presence of external vitamin B12. The chain is Ethanolamine ammonia-lyase small subunit from Escherichia coli (strain SMS-3-5 / SECEC).